Here is a 428-residue protein sequence, read N- to C-terminus: Histidine--tRNA ligase (428 aa).

Belongs to the class-II aminoacyl-tRNA synthetase family. In terms of assembly, homodimer.

The protein resides in the cytoplasm. It carries out the reaction tRNA(His) + L-histidine + ATP = L-histidyl-tRNA(His) + AMP + diphosphate + H(+). This Azotobacter vinelandii (strain DJ / ATCC BAA-1303) protein is Histidine--tRNA ligase.